Consider the following 128-residue polypeptide: MDAVPLATPEEAWRIAKSLNYRHIGGTVVAVVQDVETGEVLMVGHMDPVAVVLTLTTGLAHYYSTSRKRIWLKGETSGHYQIVKEFRTDCDGDAVVLKVVQIGAACHTGARSCFSSPASFKIRLNRDA.

D89 is a binding site for Mg(2+). Zn(2+) is bound at residue C90. Residues D91 and D93 each coordinate Mg(2+). Zn(2+) is bound by residues C106 and C113.

Belongs to the PRA-CH family. In terms of assembly, homodimer. It depends on Mg(2+) as a cofactor. The cofactor is Zn(2+).

Its subcellular location is the cytoplasm. It carries out the reaction 1-(5-phospho-beta-D-ribosyl)-5'-AMP + H2O = 1-(5-phospho-beta-D-ribosyl)-5-[(5-phospho-beta-D-ribosylamino)methylideneamino]imidazole-4-carboxamide. The protein operates within amino-acid biosynthesis; L-histidine biosynthesis; L-histidine from 5-phospho-alpha-D-ribose 1-diphosphate: step 3/9. Its function is as follows. Catalyzes the hydrolysis of the adenine ring of phosphoribosyl-AMP. In Pyrobaculum calidifontis (strain DSM 21063 / JCM 11548 / VA1), this protein is Phosphoribosyl-AMP cyclohydrolase.